Here is a 118-residue protein sequence, read N- to C-terminus: Ribonuclease P protein component (118 aa).

The protein belongs to the RnpA family. Consists of a catalytic RNA component (M1 or rnpB) and a protein subunit.

The catalysed reaction is Endonucleolytic cleavage of RNA, removing 5'-extranucleotides from tRNA precursor.. Its function is as follows. RNaseP catalyzes the removal of the 5'-leader sequence from pre-tRNA to produce the mature 5'-terminus. It can also cleave other RNA substrates such as 4.5S RNA. The protein component plays an auxiliary but essential role in vivo by binding to the 5'-leader sequence and broadening the substrate specificity of the ribozyme. The chain is Ribonuclease P protein component from Mycoplasma pneumoniae (strain ATCC 29342 / M129 / Subtype 1) (Mycoplasmoides pneumoniae).